We begin with the raw amino-acid sequence, 597 residues long: NADH-quinone oxidoreductase subunit C/D (597 aa).

Residues 1 to 187 form an NADH dehydrogenase I subunit C region; it reads MIDENKKKNT…ESFFLDEQKE (187 aa). Positions 211-597 are NADH dehydrogenase I subunit D; the sequence is DFMFLNLGPN…IDFVMSDVDR (387 aa).

It in the N-terminal section; belongs to the complex I 30 kDa subunit family. This sequence in the C-terminal section; belongs to the complex I 49 kDa subunit family. As to quaternary structure, NDH-1 is composed of 13 different subunits. Subunits NuoB, CD, E, F, and G constitute the peripheral sector of the complex.

Its subcellular location is the cell inner membrane. The catalysed reaction is a quinone + NADH + 5 H(+)(in) = a quinol + NAD(+) + 4 H(+)(out). NDH-1 shuttles electrons from NADH, via FMN and iron-sulfur (Fe-S) centers, to quinones in the respiratory chain. The immediate electron acceptor for the enzyme in this species is believed to be ubiquinone. Couples the redox reaction to proton translocation (for every two electrons transferred, four hydrogen ions are translocated across the cytoplasmic membrane), and thus conserves the redox energy in a proton gradient. In Buchnera aphidicola subsp. Schizaphis graminum (strain Sg), this protein is NADH-quinone oxidoreductase subunit C/D.